The following is an 851-amino-acid chain: Pentatricopeptide repeat-containing protein At3g54980, mitochondrial (851 aa).

Residues 1–26 (MRSLLVFRKIPSRIRLRNLRNNKPFC) constitute a mitochondrion transit peptide. PPR repeat units follow at residues 162 to 196 (NSRA…DVIP), 197 to 231 (FFPY…GVDG), 232 to 266 (DNVT…GAEP), 267 to 301 (DSLL…KLCV), 303 to 337 (SQET…GISM), 338 to 372 (NVVA…GPSP), 373 to 407 (NSVT…GLTP), 408 to 438 (SVFH…SFET), 442 to 476 (NVFV…GIGP), 477 to 511 (NVVS…GLKP), 512 to 546 (NNYT…NIEV), 547 to 577 (NGVV…MIEE), 583 to 617 (SCMS…GISP), 618 to 652 (NVIT…GVKL), 653 to 687 (DIPA…GLNP), 688 to 722 (SQPI…GLRC), 723 to 757 (DLGT…GLVP), 758 to 792 (DEII…NVTP), and 793 to 827 (NVLI…GILP).

Belongs to the PPR family. P subfamily.

The protein resides in the mitochondrion. The protein is Pentatricopeptide repeat-containing protein At3g54980, mitochondrial of Arabidopsis thaliana (Mouse-ear cress).